The following is a 474-amino-acid chain: tRNA-2-methylthio-N(6)-dimethylallyladenosine synthase (474 aa).

One can recognise an MTTase N-terminal domain in the interval 3–120 (KKLHIKTWGC…LPEMIDQIRD (118 aa)). Residues cysteine 12, cysteine 49, cysteine 83, cysteine 157, cysteine 161, and cysteine 164 each coordinate [4Fe-4S] cluster. The 233-residue stretch at 143-375 (RADGPSAFVS…QDRITQQAMR (233 aa)) folds into the Radical SAM core domain. In terms of domain architecture, TRAM spans 378-441 (RQMLGTVQRI…TNSLRGTFVR (64 aa)).

Belongs to the methylthiotransferase family. MiaB subfamily. In terms of assembly, monomer. The cofactor is [4Fe-4S] cluster.

It localises to the cytoplasm. The enzyme catalyses N(6)-dimethylallyladenosine(37) in tRNA + (sulfur carrier)-SH + AH2 + 2 S-adenosyl-L-methionine = 2-methylsulfanyl-N(6)-dimethylallyladenosine(37) in tRNA + (sulfur carrier)-H + 5'-deoxyadenosine + L-methionine + A + S-adenosyl-L-homocysteine + 2 H(+). Catalyzes the methylthiolation of N6-(dimethylallyl)adenosine (i(6)A), leading to the formation of 2-methylthio-N6-(dimethylallyl)adenosine (ms(2)i(6)A) at position 37 in tRNAs that read codons beginning with uridine. In Shewanella sediminis (strain HAW-EB3), this protein is tRNA-2-methylthio-N(6)-dimethylallyladenosine synthase.